Reading from the N-terminus, the 27-residue chain is Zinc metalloproteinase multactivase catalytic subunit (27 aa).

A Peptidase M12B domain is found at 12–27 (FIELVIIVDHSXXTYK). A Ca(2+)-binding site is contributed by glutamate 14.

This sequence belongs to the venom metalloproteinase (M12B) family. P-III subfamily. P-IIId sub-subfamily. As to quaternary structure, heterodimer of a metalloproteinase subunit and a regulatory subunit comprising two homologous disulfide-linked lectins (AC P81798). Requires Zn(2+) as cofactor. As to expression, expressed by the venom gland.

The protein resides in the secreted. Its function is as follows. This carinactivase-like calcium-dependent prothrombin (F2) activator activates prothrombin via recognition of the calcium ion bound conformation of its gamma-carboxyglutamic acid (GLA) domain, and the subsequent conversion of prothrombin to active thrombin is catalyzed by the catalytic subunit. In Echis multisquamatus (Central Asian sand viper), this protein is Zinc metalloproteinase multactivase catalytic subunit.